The sequence spans 183 residues: Capsid protein (183 aa).

Residues N136 to C183 form a disordered region. Basic residues predominate over residues V149–S176. Phosphoserine; by host occurs at positions 155, 162, and 170. A 1; half-length repeat occupies S155–P161. The tract at residues S155–Q177 is 3 X 8 AA repeats of S-P-R-R-R-[PR]-S-Q. A Bipartite nuclear localization signal motif is present at residues R158–R175. 2 tandem repeats follow at residues S162–Q169 and S170–Q177. The segment at Q177–C183 is RNA binding.

Belongs to the orthohepadnavirus core antigen family. As to quaternary structure, homodimerizes, then multimerizes. Interacts with cytosol exposed regions of viral L glycoprotein present in the reticulum-to-Golgi compartment. Interacts with human FLNB. Phosphorylated form interacts with host importin alpha; this interaction depends on the exposure of the NLS, which itself depends upon genome maturation and/or phosphorylation of the capsid protein. Interacts with host NUP153. Post-translationally, phosphorylated by host SRPK1, SRPK2, and maybe protein kinase C or GAPDH. Phosphorylation is critical for pregenomic RNA packaging. Protein kinase C phosphorylation is stimulated by HBx protein and may play a role in transport of the viral genome to the nucleus at the late step during the viral replication cycle.

The protein localises to the virion. Its subcellular location is the host cytoplasm. Self assembles to form an icosahedral capsid. Most capsids appear to be large particles with an icosahedral symmetry of T=4 and consist of 240 copies of capsid protein, though a fraction forms smaller T=3 particles consisting of 180 capsid proteins. Entering capsids are transported along microtubules to the nucleus. Phosphorylation of the capsid is thought to induce exposure of nuclear localization signal in the C-terminal portion of the capsid protein that allows binding to the nuclear pore complex via the importin (karyopherin-) alpha and beta. Capsids are imported in intact form through the nuclear pore into the nuclear basket, where it probably binds NUP153. Only capsids that contain the mature viral genome can release the viral DNA and capsid protein into the nucleoplasm. Immature capsids get stuck in the basket. Capsids encapsulate the pre-genomic RNA and the P protein. Pre-genomic RNA is reverse-transcribed into DNA while the capsid is still in the cytoplasm. The capsid can then either be directed to the nucleus, providing more genomes for transcription, or bud through the endoplasmic reticulum to provide new virions. In Homo sapiens (Human), this protein is Capsid protein.